We begin with the raw amino-acid sequence, 169 residues long: Ribosome maturation factor RimP (169 aa).

This sequence belongs to the RimP family.

The protein resides in the cytoplasm. Required for maturation of 30S ribosomal subunits. The protein is Ribosome maturation factor RimP of Pseudomonas putida (strain ATCC 700007 / DSM 6899 / JCM 31910 / BCRC 17059 / LMG 24140 / F1).